A 92-amino-acid polypeptide reads, in one-letter code: Cell division protein FtsB (92 aa).

At 1–3 (MRL) the chain is on the cytoplasmic side. A helical transmembrane segment spans residues 4–21 (FIFLLVAVLLLFQYDFWF). Residues 22-92 (GKNGYLDYKR…IFYHIVKEQK (71 aa)) lie on the Periplasmic side of the membrane. The stretch at 26–74 (YLDYKRTAQQIAQHKQENEKLSQRNQVVAAEIKDLKQGVEAIEERARFQ) forms a coiled coil.

This sequence belongs to the FtsB family. In terms of assembly, part of a complex composed of FtsB, FtsL and FtsQ.

It is found in the cell inner membrane. Functionally, essential cell division protein. May link together the upstream cell division proteins, which are predominantly cytoplasmic, with the downstream cell division proteins, which are predominantly periplasmic. This Pasteurella multocida (strain Pm70) protein is Cell division protein FtsB.